A 161-amino-acid chain; its full sequence is Large ribosomal subunit protein uL10 (161 aa).

Belongs to the universal ribosomal protein uL10 family. Part of the ribosomal stalk of the 50S ribosomal subunit. The N-terminus interacts with L11 and the large rRNA to form the base of the stalk. The C-terminus forms an elongated spine to which L12 dimers bind in a sequential fashion forming a multimeric L10(L12)X complex.

Functionally, forms part of the ribosomal stalk, playing a central role in the interaction of the ribosome with GTP-bound translation factors. The chain is Large ribosomal subunit protein uL10 (rplJ) from Wigglesworthia glossinidia brevipalpis.